The chain runs to 265 residues: Adenosylcobinamide-GDP ribazoletransferase (265 aa).

Helical transmembrane passes span 51-71 (LVGV…QLIF), 72-92 (PDSV…GAFH), 121-140 (IGTY…FVLW), and 203-223 (VASL…LFAF).

It belongs to the CobS family. Mg(2+) serves as cofactor.

The protein localises to the cell inner membrane. The catalysed reaction is alpha-ribazole + adenosylcob(III)inamide-GDP = adenosylcob(III)alamin + GMP + H(+). The enzyme catalyses alpha-ribazole 5'-phosphate + adenosylcob(III)inamide-GDP = adenosylcob(III)alamin 5'-phosphate + GMP + H(+). It participates in cofactor biosynthesis; adenosylcobalamin biosynthesis; adenosylcobalamin from cob(II)yrinate a,c-diamide: step 7/7. In terms of biological role, joins adenosylcobinamide-GDP and alpha-ribazole to generate adenosylcobalamin (Ado-cobalamin). Also synthesizes adenosylcobalamin 5'-phosphate from adenosylcobinamide-GDP and alpha-ribazole 5'-phosphate. The protein is Adenosylcobinamide-GDP ribazoletransferase of Vibrio parahaemolyticus serotype O3:K6 (strain RIMD 2210633).